A 287-amino-acid chain; its full sequence is MELWPGAGTLLLLLFLLLLLLLPTLWFCSPSAKYFFKMAFYNGWILFLAVLAIPVCAVRGRNVENMKILRLMLLHIKYLYGIRVEVRGAHHFPPSQPYVVVSNHQSSLDLLGMMEVLPGRCVPIAKRELLWAGSAGLACWLAGVIFIDRKRTGDAISVMSEVAQTLLTQDVRVWVFPEGTRNHNGSMLPFKRGAFHLAVQAQVPIVPIVMSSYQDFYCKKERRFTSGRCQVRVLPPVPTEGLKPDDVPALADRVRHSMLTVFREISTDGRGGGDYLKKPGGVGEAGL.

The signal sequence occupies residues 1–26 (MELWPGAGTLLLLLFLLLLLLLPTLW). At 27–37 (FCSPSAKYFFK) the chain is on the lumenal side. The helical transmembrane segment at 38 to 58 (MAFYNGWILFLAVLAIPVCAV) threads the bilayer. At 59–127 (RGRNVENMKI…PGRCVPIAKR (69 aa)) the chain is on the cytoplasmic side. The short motif at 104-109 (HQSSLD) is the HXXXXD motif element. Residues 128 to 148 (ELLWAGSAGLACWLAGVIFID) traverse the membrane as a helical segment. Residues 149 to 287 (RKRTGDAISV…KPGGVGEAGL (139 aa)) are Lumenal-facing. Positions 178–181 (EGTR) match the EGTR motif motif.

Belongs to the 1-acyl-sn-glycerol-3-phosphate acyltransferase family.

Its subcellular location is the endoplasmic reticulum membrane. It catalyses the reaction a 1-acyl-sn-glycero-3-phosphate + an acyl-CoA = a 1,2-diacyl-sn-glycero-3-phosphate + CoA. The catalysed reaction is 1-(9Z-octadecenoyl)-sn-glycero-3-phosphate + (9Z)-octadecenoyl-CoA = 1,2-di-(9Z-octadecenoyl)-sn-glycero-3-phosphate + CoA. It carries out the reaction 1-(9Z-octadecenoyl)-sn-glycero-3-phosphate + hexadecanoyl-CoA = 1-(9Z)-octadecenoyl-2-hexadecanoyl-sn-glycero-3-phosphate + CoA. The enzyme catalyses heptadecanoyl-CoA + 1-(9Z-octadecenoyl)-sn-glycero-3-phosphate = 1-(9Z)-octadecenoyl-2-heptadecanoyl-sn-glycero-3-phosphate + CoA. It catalyses the reaction 1-(9Z-octadecenoyl)-sn-glycero-3-phosphate + octadecanoyl-CoA = 1-(9Z-octadecenoyl)-2-octadecanoyl-sn-glycero-3-phosphate + CoA. The catalysed reaction is 1-(9Z-octadecenoyl)-sn-glycero-3-phosphate + (9Z,12Z)-octadecadienoyl-CoA = 1-(9Z)-octadecenoyl-2-(9Z,12Z)-octadecadienoyl-sn-glycero-3-phosphate + CoA. It carries out the reaction 1-(9Z-octadecenoyl)-sn-glycero-3-phosphate + tetradecanoyl-CoA = 1-(9Z)-octadecenoyl-2-tetradecanoyl-sn-glycero-3-phosphate + CoA. The enzyme catalyses pentadecanoyl-CoA + 1-(9Z-octadecenoyl)-sn-glycero-3-phosphate = 1-(9Z)-octadecenoyl-2-pentadecanoyl-sn-glycero-3-phosphate + CoA. It catalyses the reaction 1-hexadecanoyl-sn-glycero-3-phosphate + (9Z)-octadecenoyl-CoA = 1-hexadecanoyl-2-(9Z-octadecenoyl)-sn-glycero-3-phosphate + CoA. The catalysed reaction is 1-(9Z,12Z,15Z)-octadecatrienoyl-sn-glycero-3-phosphate + (9Z)-octadecenoyl-CoA = 1-(9Z,12Z,15Z)-octadecatrienoyl-2-(9Z)-octadecenoyl-sn-glycero-3-phosphate + CoA. It carries out the reaction 1-(6Z,9Z,12Z-octadecatrienoyl)-sn-glycero-3-phosphate + (9Z)-octadecenoyl-CoA = (6Z,9Z,12Z)-octadecatrienoyl-2-(9Z)-octadecenoyl-sn-glycero-3-phosphate + CoA. The enzyme catalyses 1-eicosanoyl-sn-glycero-3-phosphate + (9Z)-octadecenoyl-CoA = 1-eicosanoyl-2-(9Z)-octadecenoyl-sn-glycero-3-phosphate + CoA. It catalyses the reaction 1-tetradecanoyl-sn-glycerol 3-phosphate + (9Z)-octadecenoyl-CoA = 1-tetradecanoyl-2-(9Z)-octadecenoyl-sn-glycero-3-phosphate + CoA. The catalysed reaction is 1-(9Z-octadecenoyl)-sn-glycero-3-phosphate + (5Z,8Z,11Z,14Z)-eicosatetraenoyl-CoA = 1-(9Z)-octadecenoyl-2-(5Z,8Z,11Z,14Z)-eicosatetraenoyl-sn-glycero-3-phosphate + CoA. It carries out the reaction 1-(9Z-octadecenoyl)-sn-glycero-3-phosphate + dodecanoyl-CoA = 1-(9Z)-octadecenoyl-2-dodecanoyl-sn-glycero-3-phosphate + CoA. The enzyme catalyses (6Z)-octadecenoyl-CoA + 1-(9Z-octadecenoyl)-sn-glycero-3-phosphate = 1-(9Z)-octadecenoyl-2-(6Z)-octadecenoyl-sn-glycero-3-phosphate + CoA. It catalyses the reaction (11Z)-octadecenoyl-CoA + 1-(9Z-octadecenoyl)-sn-glycero-3-phosphate = 1-(9Z)-octadecenoyl-2-(11Z)-octadecenoyl-sn-glycero-3-phosphate + CoA. The catalysed reaction is (9Z)-hexadecenoyl-CoA + 1-(9Z-octadecenoyl)-sn-glycero-3-phosphate = 1-(9Z-octadecenoyl)-2-(9Z-hexadecenoyl)-sn-glycero-3-phosphate + CoA. It functions in the pathway phospholipid metabolism; CDP-diacylglycerol biosynthesis; CDP-diacylglycerol from sn-glycerol 3-phosphate: step 2/3. Its function is as follows. Converts 1-acyl-sn-glycerol-3-phosphate (lysophosphatidic acid or LPA) into 1,2-diacyl-sn-glycerol-3-phosphate (phosphatidic acid or PA) by incorporating an acyl moiety at the sn-2 position of the glycerol backbone. This is 1-acyl-sn-glycerol-3-phosphate acyltransferase alpha (AGPAT1) from Bos taurus (Bovine).